The sequence spans 491 residues: Feruloyl-CoA synthase (491 aa).

A Mg(2+)-binding site is contributed by T154. 3 residues coordinate ATP: A199, G291, and T295. A Mg(2+)-binding site is contributed by E296. Residues D374 and K391 each coordinate ATP.

This sequence belongs to the ATP-dependent AMP-binding enzyme family. Mg(2+) is required as a cofactor.

It carries out the reaction (E)-ferulate + ATP + CoA = (E)-feruloyl-CoA + AMP + diphosphate. In terms of biological role, catalyzes the formation of (E)-feruloyl-CoA, AMP and diphosphate from (E)-ferulate, CoA and ATP. Involved in the degradation pathway of lignin-derived aromatic compounds of plant cell walls. Catalyzes the first enzymatic step in the conversion of ferulic acid into high value compound vanillin. The sequence is that of Feruloyl-CoA synthase from Amycolatopsis sp.